The primary structure comprises 880 residues: Leucine--tRNA ligase (880 aa).

A 'HIGH' region motif is present at residues Pro-46–His-56. The short motif at Lys-638–Ser-642 is the 'KMSKS' region element. Lys-641 lines the ATP pocket.

The protein belongs to the class-I aminoacyl-tRNA synthetase family.

The protein localises to the cytoplasm. The enzyme catalyses tRNA(Leu) + L-leucine + ATP = L-leucyl-tRNA(Leu) + AMP + diphosphate. This Stenotrophomonas maltophilia (strain K279a) protein is Leucine--tRNA ligase.